We begin with the raw amino-acid sequence, 339 residues long: Protein RecA (339 aa).

66 to 73 (GPESSGKT) is an ATP binding site.

This sequence belongs to the RecA family.

It localises to the cytoplasm. Can catalyze the hydrolysis of ATP in the presence of single-stranded DNA, the ATP-dependent uptake of single-stranded DNA by duplex DNA, and the ATP-dependent hybridization of homologous single-stranded DNAs. It interacts with LexA causing its activation and leading to its autocatalytic cleavage. The polypeptide is Protein RecA (Geobacter metallireducens (strain ATCC 53774 / DSM 7210 / GS-15)).